Consider the following 150-residue polypeptide: uncharacterized protein (150 aa).

The protein belongs to the aspartate/glutamate racemases family.

This is an uncharacterized protein from Pectobacterium carotovorum subsp. carotovorum (Erwinia carotovora subsp. carotovora).